A 488-amino-acid chain; its full sequence is 3-octaprenyl-4-hydroxybenzoate carboxy-lyase (488 aa).

Mn(2+) is bound at residue Asn172. Prenylated FMN-binding positions include 175–177, 189–191, and 194–195; these read IYR, RWL, and RG. Glu238 contributes to the Mn(2+) binding site. Residue Asp287 is the Proton donor of the active site.

The protein belongs to the UbiD family. As to quaternary structure, homohexamer. The cofactor is prenylated FMN. Mn(2+) serves as cofactor.

The protein resides in the cell membrane. It catalyses the reaction a 4-hydroxy-3-(all-trans-polyprenyl)benzoate + H(+) = a 2-(all-trans-polyprenyl)phenol + CO2. Its pathway is cofactor biosynthesis; ubiquinone biosynthesis. Functionally, catalyzes the decarboxylation of 3-octaprenyl-4-hydroxy benzoate to 2-octaprenylphenol, an intermediate step in ubiquinone biosynthesis. The protein is 3-octaprenyl-4-hydroxybenzoate carboxy-lyase of Pseudomonas aeruginosa (strain LESB58).